Reading from the N-terminus, the 127-residue chain is DNA-directed RNA polymerase subunit omega (127 aa).

It belongs to the RNA polymerase subunit omega family. The RNAP catalytic core consists of 2 alpha, 1 beta, 1 beta' and 1 omega subunit. When a sigma factor is associated with the core the holoenzyme is formed, which can initiate transcription.

The catalysed reaction is RNA(n) + a ribonucleoside 5'-triphosphate = RNA(n+1) + diphosphate. Promotes RNA polymerase assembly. Latches the N- and C-terminal regions of the beta' subunit thereby facilitating its interaction with the beta and alpha subunits. The sequence is that of DNA-directed RNA polymerase subunit omega from Rickettsia africae (strain ESF-5).